The primary structure comprises 3303 residues: Protein unc-80 homolog (3303 aa).

Positions 1-37 are enriched in low complexity; it reads MVTNAAGTAATGGATSNTTNNNNLQTNNNSHGANNNN. The disordered stretch occupies residues 1–43; sequence MVTNAAGTAATGGATSNTTNNNNLQTNNNSHGANNNNDDFDFD. A helical membrane pass occupies residues 202–222; it reads LFSVPTITLFVYLFAPIIHHL. 7 disordered regions span residues 284 to 316, 361 to 422, 491 to 512, 526 to 546, 1036 to 1067, 1443 to 1563, and 1627 to 1671; these read LSADAMSPKADSPQSGISDYGRQDEEGSWVSSP, LQQQ…SESI, LYQGPGSNSRDSPGSSVVKDYI, AEEPQSAPSTTERRGSEKKKR, FRRRTTGVRPTLTPRHSERALLSDSTSSSERN, LHEP…DDTA, and VEPT…KDRI. Positions 361-377 are enriched in low complexity; that stretch reads LQQQQSQSRRGSRQSMN. 2 stretches are compositionally biased toward basic and acidic residues: residues 378-391 and 401-422; these read SRDKDKVPSTKFEF and SMKEKRSASIEKETDSDKSESI. The segment covering 495-505 has biased composition (polar residues); sequence PGSNSRDSPGS. The segment covering 1058–1067 has biased composition (polar residues); it reads SDSTSSSERN. Basic residues predominate over residues 1490–1499; the sequence is FKRRSLKLRR. The span at 1546–1556 shows a compositional bias: polar residues; it reads DDQQPESPTDS. Residues 1660–1671 are compositionally biased toward basic and acidic residues; the sequence is KRKDSLSRKDRI. The next 3 membrane-spanning stretches (helical) occupy residues 1969-1989, 2018-2038, and 2048-2068; these read VYEIAYQVIWVCLVEESALFL, LPQQAAFALYNSIIGYIMFYV, and LVGSALSVLWMVVHSVHGIMF. 3 disordered regions span residues 2518 to 2550, 3003 to 3158, and 3170 to 3262; these read NGPYRNSPEHKGSSQRNCSRGPPCSPGLDFEEE, EEKR…FKAQ, and FRHS…YRDN. Basic and acidic residues predominate over residues 3003-3018; sequence EEKRYDRESSEQKKSD. 2 stretches are compositionally biased toward polar residues: residues 3033–3053 and 3071–3106; these read QRPSLISIFTGTTTGQASHSH and PSDTLSQQTLHPPRESLSSSSTGRDPHTTTSESQSG. Gly residues predominate over residues 3124-3134; it reads SGHGSGGGIGT. Positions 3135 to 3152 are enriched in low complexity; it reads GAASAVPSHLSHSQSLQQ. Basic residues predominate over residues 3198–3217; that stretch reads SRLQRSKAASRKTFRLKRSR. Positions 3226 to 3239 are enriched in polar residues; sequence IVTSQEEQAPQAQA. A compositionally biased stretch (low complexity) spans 3246 to 3257; sequence SWDSVSQTSSTS.

This sequence belongs to the unc-80 family. In terms of assembly, interacts with unc79 and na. Can interact with unc79 independently of na.

Its subcellular location is the membrane. Component of the na (narrow abdomen) sodium channel complex. In the circadian clock neurons it functions with na and unc79 to promote circadian rhythmicity. The protein is Protein unc-80 homolog of Drosophila melanogaster (Fruit fly).